A 334-amino-acid polypeptide reads, in one-letter code: L-lactate dehydrogenase (334 aa).

The interval 1 to 22 is disordered; that stretch reads MASTKGKLIHEMVPSKERDPPH. Basic and acidic residues predominate over residues 8–22; that stretch reads LIHEMVPSKERDPPH. NAD(+)-binding positions include 31 to 59 and Arg101; that span reads GQVG…VEDR. Substrate-binding residues include Arg108, Asn140, and Arg171. Asn140 contacts NAD(+). The Proton acceptor role is filled by His195. Substrate is bound at residue Thr250.

It belongs to the LDH/MDH superfamily. LDH family. As to quaternary structure, homotetramer.

Its subcellular location is the cytoplasm. The catalysed reaction is (S)-lactate + NAD(+) = pyruvate + NADH + H(+). The protein operates within fermentation; pyruvate fermentation to lactate; (S)-lactate from pyruvate: step 1/1. This is L-lactate dehydrogenase from Petromyzon marinus (Sea lamprey).